The sequence spans 239 residues: Type III effector protein HopBA1 (239 aa).

Residues 1 to 20 (MLNRISSSSPTSYVSSGSSS) show a composition bias toward low complexity. Residues 1 to 31 (MLNRISSSSPTSYVSSGSSSAGINPSINVRP) are disordered.

The protein localises to the secreted. Its subcellular location is the host cell. Virulence factor recognized by the A.thaliana disease resistance protein RBA1, which triggers plant cell death. HopBA1 enhances RBA1 self-association, which is necessary for ectopic autoactivation of host cell death. The sequence is that of Type III effector protein HopBA1 from Pseudomonas syringae pv. aptata.